Consider the following 62-residue polypeptide: Small ribosomal subunit protein eS27 (62 aa).

The Zn(2+) site is built by C17, C20, C36, and C39. Residues 17–39 form a C4-type zinc finger; the sequence is CPDCDNEQTVFSKASTTVKCVVC.

This sequence belongs to the eukaryotic ribosomal protein eS27 family. Part of the 30S ribosomal subunit. Zn(2+) serves as cofactor.

In Methanoregula boonei (strain DSM 21154 / JCM 14090 / 6A8), this protein is Small ribosomal subunit protein eS27.